A 206-amino-acid chain; its full sequence is Small ribosomal subunit protein uS4 (206 aa).

Positions 94–157 constitute an S4 RNA-binding domain; the sequence is RRLDNVVYRL…RRRTYFKNLI (64 aa).

It belongs to the universal ribosomal protein uS4 family. As to quaternary structure, part of the 30S ribosomal subunit. Contacts protein S5. The interaction surface between S4 and S5 is involved in control of translational fidelity.

Its function is as follows. One of the primary rRNA binding proteins, it binds directly to 16S rRNA where it nucleates assembly of the body of the 30S subunit. In terms of biological role, with S5 and S12 plays an important role in translational accuracy. The polypeptide is Small ribosomal subunit protein uS4 (Roseiflexus sp. (strain RS-1)).